We begin with the raw amino-acid sequence, 78 residues long: Large ribosomal subunit protein eL38 (78 aa).

It belongs to the eukaryotic ribosomal protein eL38 family. Component of the large ribosomal subunit (LSU). Mature yeast ribosomes consist of a small (40S) and a large (60S) subunit. The 40S small subunit contains 1 molecule of ribosomal RNA (18S rRNA) and 33 different proteins (encoded by 57 genes). The large 60S subunit contains 3 rRNA molecules (25S, 5.8S and 5S rRNA) and 46 different proteins (encoded by 81 genes).

The protein resides in the cytoplasm. Component of the ribosome, a large ribonucleoprotein complex responsible for the synthesis of proteins in the cell. The small ribosomal subunit (SSU) binds messenger RNAs (mRNAs) and translates the encoded message by selecting cognate aminoacyl-transfer RNA (tRNA) molecules. The large subunit (LSU) contains the ribosomal catalytic site termed the peptidyl transferase center (PTC), which catalyzes the formation of peptide bonds, thereby polymerizing the amino acids delivered by tRNAs into a polypeptide chain. The nascent polypeptides leave the ribosome through a tunnel in the LSU and interact with protein factors that function in enzymatic processing, targeting, and the membrane insertion of nascent chains at the exit of the ribosomal tunnel. The chain is Large ribosomal subunit protein eL38 from Saccharomyces cerevisiae (strain ATCC 204508 / S288c) (Baker's yeast).